A 304-amino-acid chain; its full sequence is Glycine--tRNA ligase alpha subunit (304 aa).

Belongs to the class-II aminoacyl-tRNA synthetase family. Tetramer of two alpha and two beta subunits.

The protein localises to the cytoplasm. The catalysed reaction is tRNA(Gly) + glycine + ATP = glycyl-tRNA(Gly) + AMP + diphosphate. The protein is Glycine--tRNA ligase alpha subunit of Streptococcus agalactiae serotype Ia (strain ATCC 27591 / A909 / CDC SS700).